Reading from the N-terminus, the 274-residue chain is uncharacterized protein (274 aa).

This sequence belongs to the type II cytokine receptor family.

This is an uncharacterized protein from Sus scrofa (Pig).